Reading from the N-terminus, the 115-residue chain is Cysteine-rich venom protein 5 (115 aa).

The signal sequence occupies residues 1-22 (MSKVMIIMLVGMIFAIISTVSG). Disulfide bonds link Cys26–Cys41, Cys33–Cys44, and Cys40–Cys51. The segment at 54–115 (RIGPPINTQP…RKPTNRPRSH (62 aa)) is disordered. Basic residues-rich tracts occupy residues 68–77 (QPTRRTRGPK) and 86–115 (NRTR…PRSH).

Expressed by the venom gland.

The protein localises to the secreted. This chain is Cysteine-rich venom protein 5, found in Pimpla hypochondriaca (Parasitoid wasp).